A 354-amino-acid polypeptide reads, in one-letter code: Src kinase-associated phosphoprotein 1 (354 aa).

Residues 107–210 (NVIKQGYLEK…WVDQISFLLK (104 aa)) enclose the PH domain. 2 positions are modified to phosphotyrosine: Tyr-142 and Tyr-236. A phosphotyrosine; by FYN mark is found at Tyr-267 and Tyr-290. The tract at residues 285 to 290 (RRRVDY) is interaction with FYB1. The 62-residue stretch at 289 to 350 (DYADYYQGLW…PKDYLTTAFE (62 aa)) folds into the SH3 domain.

This sequence belongs to the SKAP family. Homodimer. Interacts with FYN. Interacts with PTPRC. Interacts with GRB2 when phosphorylated on Tyr-267. Interacts with FYB1, which is required for SKAP2 protein stability. Part of a complex consisting of SKAP1, FYB1 and CLNK. Interacts with RASGRP1. Interacts with FYB2. Phosphorylated on tyrosines. Phosphorylation by FYN on Tyr-267 is required for GRB2 interaction. Phosphorylation by FYN on Tyr-290 abolishes interaction with FYB1. Tyr-236 is dephosphorylated by PTPRC. Expressed in mast cells (at protein level).

It localises to the cytoplasm. The protein localises to the nucleus. Its subcellular location is the cell membrane. Its function is as follows. Positively regulates T-cell receptor signaling by enhancing the MAP kinase pathway. Required for optimal conjugation between T-cells and antigen-presenting cells by promoting the clustering of integrin ITGAL on the surface of T-cells. May be involved in high affinity immunoglobulin epsilon receptor signaling in mast cells. This chain is Src kinase-associated phosphoprotein 1 (Skap1), found in Rattus norvegicus (Rat).